The following is a 508-amino-acid chain: Protoporphyrinogen oxidase 2, chloroplastic/mitochondrial (508 aa).

The transit peptide at M1–V22 directs the protein to the chloroplast and mitochondrion. FAD is bound by residues G23 to G28, E46 to A47, and G68 to T71. A disordered region spans residues K219–S239. FAD-binding positions include V268 and L475–V477.

The protein belongs to the protoporphyrinogen/coproporphyrinogen oxidase family. Protoporphyrinogen oxidase subfamily. The cofactor is FAD.

The protein localises to the plastid. It is found in the chloroplast. Its subcellular location is the mitochondrion. It carries out the reaction protoporphyrinogen IX + 3 O2 = protoporphyrin IX + 3 H2O2. It participates in porphyrin-containing compound metabolism; protoporphyrin-IX biosynthesis; protoporphyrin-IX from protoporphyrinogen-IX: step 1/1. It functions in the pathway porphyrin-containing compound metabolism; chlorophyll biosynthesis. Catalyzes the 6-electron oxidation of protoporphyrinogen-IX to form protoporphyrin-IX. This Arabidopsis thaliana (Mouse-ear cress) protein is Protoporphyrinogen oxidase 2, chloroplastic/mitochondrial (PPOX2).